We begin with the raw amino-acid sequence, 436 residues long: 3-ketoacyl-CoA thiolase (436 aa).

The Acyl-thioester intermediate role is filled by cysteine 99. Active-site proton acceptor residues include histidine 392 and cysteine 422.

The protein belongs to the thiolase-like superfamily. Thiolase family. Heterotetramer of two alpha chains (FadJ) and two beta chains (FadI).

The protein resides in the cytoplasm. The catalysed reaction is an acyl-CoA + acetyl-CoA = a 3-oxoacyl-CoA + CoA. Its pathway is lipid metabolism; fatty acid beta-oxidation. Catalyzes the final step of fatty acid oxidation in which acetyl-CoA is released and the CoA ester of a fatty acid two carbons shorter is formed. This chain is 3-ketoacyl-CoA thiolase, found in Yersinia pestis bv. Antiqua (strain Angola).